The chain runs to 348 residues: Cyclin-dependent kinase inhibitor 1C (348 aa).

Arg109 carries the omega-N-methylarginine modification. A disordered region spans residues 115–348 (VAVIPRSGPP…VEQTPRKRLR (234 aa)). Acidic residues-rich tracts occupy residues 207–220 (QGEE…DELG) and 227–274 (QGEE…QDEN). The span at 275-284 (QEQRGQELKD) shows a compositional bias: basic and acidic residues. Residues 309–312 (KRKR) carry the Nuclear localization signal motif.

The protein belongs to the CDI family. As to quaternary structure, interacts with PCNA. As to expression, expressed in the heart, brain, lung, skeletal muscle, kidney, pancreas and testis. High levels are seen in the placenta while low levels are seen in the liver.

The protein localises to the nucleus. Functionally, potent tight-binding inhibitor of several G1 cyclin/CDK complexes (cyclin E-CDK2, cyclin D2-CDK4, and cyclin A-CDK2) and, to lesser extent, of the mitotic cyclin B-CDC2. Negative regulator of cell proliferation. May play a role in maintenance of the non-proliferative state throughout life. This chain is Cyclin-dependent kinase inhibitor 1C (Cdkn1c), found in Mus musculus (Mouse).